Consider the following 884-residue polypeptide: MGAIGGDELVQWDKMGAAEAVNGGCGGAGKMDRIQVLVRLRPLSEKEVARREPAEWECINDSTVMFRSTFPDRPTAPTAYTFDRVFHSDCSTKEVYEEGVKEVALSVVSGINSSIFAYGQTSSGKTYTMTGVTEYTVADIYDYINKHEERAFVLKFSAIEIYNEVIRDLLSAENTPLRLWDDAEKGTYVENLTEVVLRDWNHLKGLISVCEAQRRTGETFLNEKSSRSHQILRLTVESSAREFLGKDKSTTLVASANFVDLAGSERASQALSAGTRLKEGCHINRSLLALGTVIRKLSMGSNAHIPYRDSKLTRILQPSLGGNARTAIICTLSPATSHIEQSRNTLLFGSCAKEVVTNAQVNVVMSDKALVKHLQKELARLESELRHPVQSSSLETLLKEKDNQIRKMEKEIKELKSQRDLAQSRLQDLLQSVGDHDLNRQVQGKHSVRSPPSVGMPPSVSRDDSSQVSHDDSDLYKEVRCIESNRTGGNDQLDLSAGESSSPQDSNMNSGLHGNDSNASVNSRHSRPSGEAPITLEEHLENIRRPFVSLAKDLGSSTRNSSNLRVIGRSRSCRSLTGSTMFDDMEMDDCTPLNRSLVEFPGRPVESHRRGSALHYDAETDTLSRAGSMSSEISTFKDAKTNGSVACDTEFTGIGEFVAELKEMAQVHYQKQLGDQNANGKSIGLDPIEGVSQSPSRWPLEFEKKQQEIIELWQACSISLVHRTYFFLLFKGEAADSIYMEVELRRLSFLRDTYSRGSTPSNAIVGSLSTSPVASAKKLQREREMLARQMQKRLSTEEREHTYTKWGVSLDSKRRKLQVARRLWTETKDLEHVRESASLVAKLIGLQEPGQVLKEMFGLSFAPQQQPTRRRSSNGWRYGIPSFA.

The region spanning 33-355 is the Kinesin motor domain; the sequence is RIQVLVRLRP…LLFGSCAKEV (323 aa). 119–126 contacts ATP; the sequence is GQTSSGKT. Positions 364-435 form a coiled coil; that stretch reads VMSDKALVKH…LQDLLQSVGD (72 aa). A disordered region spans residues 434-530; the sequence is GDHDLNRQVQ…VNSRHSRPSG (97 aa). The span at 449 to 460 shows a compositional bias: low complexity; it reads RSPPSVGMPPSV. Over residues 461 to 483 the composition is skewed to basic and acidic residues; sequence SRDDSSQVSHDDSDLYKEVRCIE. Polar residues predominate over residues 498-523; it reads GESSSPQDSNMNSGLHGNDSNASVNS.

The protein belongs to the TRAFAC class myosin-kinesin ATPase superfamily. Kinesin family. KIN-7 subfamily.

In Oryza sativa subsp. japonica (Rice), this protein is Kinesin-like protein KIN-7C.